Here is an 82-residue protein sequence, read N- to C-terminus: Large ribosomal subunit protein uL29 (82 aa).

It belongs to the universal ribosomal protein uL29 family.

This Trichodesmium erythraeum (strain IMS101) protein is Large ribosomal subunit protein uL29.